The primary structure comprises 104 residues: ATP-dependent Clp protease adapter protein ClpS (104 aa).

The protein belongs to the ClpS family. Binds to the N-terminal domain of the chaperone ClpA.

Its function is as follows. Involved in the modulation of the specificity of the ClpAP-mediated ATP-dependent protein degradation. In Paraburkholderia phymatum (strain DSM 17167 / CIP 108236 / LMG 21445 / STM815) (Burkholderia phymatum), this protein is ATP-dependent Clp protease adapter protein ClpS.